Consider the following 846-residue polypeptide: Exonuclease 1 (846 aa).

The tract at residues 1 to 99 (MGIQGLLQFI…RSRRERRQAN (99 aa)) is N-domain. Mg(2+) is bound by residues Asp30, Asp78, Glu150, Asp152, Asp171, Asp173, Asp225, and Asp270. The segment at 129-387 (MAHKVIKAAR…RPESGTVSDA (259 aa)) is interaction with MSH3. An I-domain region spans residues 138-229 (RSQGVDCLVA…ILSGCDYLSS (92 aa)). The interval 372–396 (HRNYSPRPESGTVSDAPQLKENPST) is disordered. Phosphoserine is present on Ser376. Residues 382–396 (GTVSDAPQLKENPST) show a composition bias toward polar residues. Residues 388–490 (PQLKENPSTV…NKFATFLQRK (103 aa)) form an interaction with MLH1 region. Positions 418–421 (KRPR) match the Nuclear localization signal motif. Phosphoserine occurs at positions 422 and 454. Lys482 carries the N6-acetyllysine modification. The residue at position 581 (Thr581) is a Phosphothreonine. A phosphoserine mark is found at Ser598 and Ser610. Residues 600–846 (PTLGTLRSCF…CGRVQRAIFQ (247 aa)) form an interaction with MSH2 region. The disordered stretch occupies residues 618-781 (FSRTPSPSPS…SIQKRKHHNA (164 aa)). 2 stretches are compositionally biased toward polar residues: residues 620–631 (RTPSPSPSTALQ) and 639–654 (SPTS…VSQL). The residue at position 621 (Thr621) is a Phosphothreonine. Ser623, Ser639, Ser660, and Ser674 each carry phosphoserine. The segment covering 655–671 (KSEESSDDESHPLREEA) has biased composition (basic and acidic residues). Polar residues-rich tracts occupy residues 672-689 (CSSQ…SSNA), 713-722 (DSQSDQTSKL), and 743-754 (KSSSADSLSTTK). Phosphoserine; by ATR is present on Ser714. At Ser746 the chain carries Phosphoserine. An interaction with MLH1 region spans residues 787 to 846 (LQIKLNELWKNFGFKKDSEKLPPCKKPLSPVRDNIQLTPEAEEDIFNKPECGRVQRAIFQ).

Belongs to the XPG/RAD2 endonuclease family. EXO1 subfamily. As to quaternary structure, interacts with the MLH1-PMS2 heterodimer via MLH1. Interacts with MSH3. Interacts with the MSH2-MSH6 heterodimer via MSH2, and this interaction may increase the processivity of the 5'-&gt;3' exonuclease activity. Interacts with PCNA, and this interaction may both stimulate the cryptic 3'-&gt;5' exonuclease activity and suppress the 5'-&gt;3' exonuclease activity. Interacts with WRN, and this interaction stimulates both the 5'-&gt;3' exonuclease activity and cleavage of 5'-overhanging flap structures. Interacts with RECQL/RECQ1, and this interaction stimulates cleavage of 5'-overhanging flap structures. Interacts with DNA helicase ZGRF1; the interaction is increased following DNA damage induction. Requires Mg(2+) as cofactor. Phosphorylated upon DNA damage and in response to agents stalling DNA replication, probably by ATM or ATR. Phosphorylation at Ser-454, Thr-621 and Ser-714 is induced upon DNA-damage caused by treatment with hydroxyurea (HU) but not upon IR treatment. The HU-induced EXO1 triple phosphorylation facilitates destabilization/degradation of the protein. As to expression, highly expressed in bone marrow, testis and thymus. Expressed at lower levels in colon, lymph nodes, ovary, placenta, prostate, small intestine, spleen and stomach.

It localises to the nucleus. Its function is as follows. 5'-&gt;3' double-stranded DNA exonuclease which may also possess a cryptic 3'-&gt;5' double-stranded DNA exonuclease activity. Functions in DNA mismatch repair (MMR) to excise mismatch-containing DNA tracts directed by strand breaks located either 5' or 3' to the mismatch. Also exhibits endonuclease activity against 5'-overhanging flap structures similar to those generated by displacement synthesis when DNA polymerase encounters the 5'-end of a downstream Okazaki fragment. Required for somatic hypermutation (SHM) and class switch recombination (CSR) of immunoglobulin genes. Essential for male and female meiosis. This Homo sapiens (Human) protein is Exonuclease 1 (EXO1).